The chain runs to 676 residues: PAS domain-containing protein cky-1 (676 aa).

Residues 45–72 are compositionally biased toward low complexity; sequence SALNNNSINVPNNNTMGMSSAGSSNGSN. The disordered stretch occupies residues 45 to 89; it reads SALNNNSINVPNNNTMGMSSAGSSNGSNLVNGQQRSTRGASKQRR. Polar residues predominate over residues 73-84; that stretch reads LVNGQQRSTRGA. The basic motif stretch occupies residues 76 to 89; that stretch reads GQQRSTRGASKQRR. Residues 76–129 enclose the bHLH domain; sequence GQQRSTRGASKQRRDQINVEIQKLRDLLPLSDLIKDRLFQLQVMSLGCIFIRKH. A helix-loop-helix motif region spans residues 90–129; sequence DQINVEIQKLRDLLPLSDLIKDRLFQLQVMSLGCIFIRKH. The region spanning 165–215 is the PAS domain; that stretch reads MLMVTRSGKILHVSDNASEYLGHSVEEIMCQGDSIYDLVDGRDHGAVQAEL. A disordered region spans residues 436–462; that stretch reads FSCQDSPPPSEEQQPSSPQTPPFTEQP.

In terms of assembly, heterodimer; efficient DNA binding requires dimerization with another bHLH protein. Forms a heterodimer with ARNT homolog aha-1; binds DNA as heterodimer.

Its subcellular location is the nucleus. Functionally, transcription factor. Efficient DNA binding requires dimerization with another bHLH protein, such as ARNT homolog aha-1. Regulates transcription of target genes, probably acting in complex with aha-1. The polypeptide is PAS domain-containing protein cky-1 (Caenorhabditis elegans).